The chain runs to 112 residues: Small ribosomal subunit protein bS6 (112 aa).

This sequence belongs to the bacterial ribosomal protein bS6 family.

Binds together with bS18 to 16S ribosomal RNA. This Chlamydia muridarum (strain MoPn / Nigg) protein is Small ribosomal subunit protein bS6 (rpsF).